A 474-amino-acid polypeptide reads, in one-letter code: Probable dipeptidase B (474 aa).

Cysteine 11 is an active-site residue.

It belongs to the peptidase C69 family.

It carries out the reaction an L-aminoacyl-L-amino acid + H2O = 2 an L-alpha-amino acid. The protein is Probable dipeptidase B (pepDB) of Lactococcus lactis subsp. lactis (strain IL1403) (Streptococcus lactis).